A 51-amino-acid polypeptide reads, in one-letter code: Glutamine synthetase (51 aa).

This sequence belongs to the glutamine synthetase family. Homooctamer.

It localises to the cytoplasm. It catalyses the reaction L-glutamate + NH4(+) + ATP = L-glutamine + ADP + phosphate + H(+). The polypeptide is Glutamine synthetase (Vitis sp. (Grape)).